We begin with the raw amino-acid sequence, 342 residues long: Holliday junction branch migration complex subunit RuvB (342 aa).

The segment at 1-22 is disordered; the sequence is MTLKPVREVSPGSQEGEERLEQ. The interval 1 to 185 is large ATPase domain (RuvB-L); it reads MTLKPVREVS…FPIQERLGYY (185 aa). Residues L24, R25, G66, K69, T70, S71, 132–134, R175, Y185, and R222 contribute to the ATP site; that span reads EDY. T70 is a Mg(2+) binding site. Residues 186–256 form a small ATPAse domain (RuvB-S) region; it reads EPTELREIAV…IVETTLERLE (71 aa). Positions 259–342 are head domain (RuvB-H); it reads GRGLDAMDRR…RPQGKQGSLI (84 aa). 3 residues coordinate DNA: R295, R314, and R319.

Belongs to the RuvB family. Homohexamer. Forms an RuvA(8)-RuvB(12)-Holliday junction (HJ) complex. HJ DNA is sandwiched between 2 RuvA tetramers; dsDNA enters through RuvA and exits via RuvB. An RuvB hexamer assembles on each DNA strand where it exits the tetramer. Each RuvB hexamer is contacted by two RuvA subunits (via domain III) on 2 adjacent RuvB subunits; this complex drives branch migration. In the full resolvosome a probable DNA-RuvA(4)-RuvB(12)-RuvC(2) complex forms which resolves the HJ.

The protein resides in the cytoplasm. It catalyses the reaction ATP + H2O = ADP + phosphate + H(+). Functionally, the RuvA-RuvB-RuvC complex processes Holliday junction (HJ) DNA during genetic recombination and DNA repair, while the RuvA-RuvB complex plays an important role in the rescue of blocked DNA replication forks via replication fork reversal (RFR). RuvA specifically binds to HJ cruciform DNA, conferring on it an open structure. The RuvB hexamer acts as an ATP-dependent pump, pulling dsDNA into and through the RuvAB complex. RuvB forms 2 homohexamers on either side of HJ DNA bound by 1 or 2 RuvA tetramers; 4 subunits per hexamer contact DNA at a time. Coordinated motions by a converter formed by DNA-disengaged RuvB subunits stimulates ATP hydrolysis and nucleotide exchange. Immobilization of the converter enables RuvB to convert the ATP-contained energy into a lever motion, pulling 2 nucleotides of DNA out of the RuvA tetramer per ATP hydrolyzed, thus driving DNA branch migration. The RuvB motors rotate together with the DNA substrate, which together with the progressing nucleotide cycle form the mechanistic basis for DNA recombination by continuous HJ branch migration. Branch migration allows RuvC to scan DNA until it finds its consensus sequence, where it cleaves and resolves cruciform DNA. The sequence is that of Holliday junction branch migration complex subunit RuvB from Anaeromyxobacter sp. (strain Fw109-5).